We begin with the raw amino-acid sequence, 310 residues long: Translocator protein BipD (310 aa).

2 coiled-coil regions span residues 127-171 (DPIL…LQDY) and 250-299 (DTAR…AIST).

It belongs to the invasin protein D family.

Its subcellular location is the secreted. Functionally, required for invasion of epithelial cells, as well as for survival within host cells, escape from endocytic vesicles and subsequent actin-tail formation. Probably regulates the secretion of effectors BipB and BipC and their final integration into the target cell membrane. This is Translocator protein BipD (bipD) from Burkholderia pseudomallei (strain 1106a).